Reading from the N-terminus, the 199-residue chain is Glycerol-3-phosphate acyltransferase (199 aa).

A run of 5 helical transmembrane segments spans residues Ala-3–Val-23, Trp-50–Val-70, Asp-78–Leu-98, Leu-113–Leu-133, and Leu-154–Phe-174.

The protein belongs to the PlsY family. Probably interacts with PlsX.

It localises to the cell inner membrane. It carries out the reaction an acyl phosphate + sn-glycerol 3-phosphate = a 1-acyl-sn-glycero-3-phosphate + phosphate. Its pathway is lipid metabolism; phospholipid metabolism. Its function is as follows. Catalyzes the transfer of an acyl group from acyl-phosphate (acyl-PO(4)) to glycerol-3-phosphate (G3P) to form lysophosphatidic acid (LPA). This enzyme utilizes acyl-phosphate as fatty acyl donor, but not acyl-CoA or acyl-ACP. The sequence is that of Glycerol-3-phosphate acyltransferase from Thermus thermophilus (strain ATCC BAA-163 / DSM 7039 / HB27).